The primary structure comprises 334 residues: Procathepsin L (334 aa).

A signal peptide spans 1–17 (MTPLLLLAVLCLGTALA). Residues 18–113 (TPKFDQTFNA…RLFQEPLMLQ (96 aa)) constitute a propeptide, activation peptide. Glu-122 is a Zn(2+) binding site. Cystine bridges form between Cys-135–Cys-178 and Cys-169–Cys-211. The active site involves Cys-138. The Zn(2+) site is built by Glu-163, Asp-184, Glu-199, Glu-205, Asp-227, Asp-250, His-253, Asp-273, and Asp-275. Cys-269 and Cys-322 form a disulfide bridge. His-276 is an active-site residue. Positions 289–290 (DS) are excised as a propeptide. Asn-300 is an active-site residue.

It belongs to the peptidase C1 family. As to quaternary structure, dimer of a heavy and a light chain linked by disulfide bonds. Interacts with Long isoform of CD74/Ii chain; the interaction stabilizes the conformation of mature CTSL. Post-translationally, during export along the endocytic pathway, pro-CTSL undergoes several proteolytic cleavages to generate the CTSL single-chain and two-chain mature forms, composed of a heavy chain linked to a light chain by disulfide bonds. Autocleavage; produces the single-chain CTSL after cleavage of the propeptide. The cleavage can be intermolecular. Both mature cathepsin L1 and procathepsin L are found in the upper epidermis. The lower epidermis predominantly contains procathepsin L. In seminiferous tubules expression is greater at stages VI-VII than at stages IX-XII.

The protein localises to the lysosome. It is found in the apical cell membrane. The protein resides in the cytoplasmic vesicle. Its subcellular location is the secretory vesicle. It localises to the chromaffin granule. The protein localises to the secreted. It is found in the extracellular space. It catalyses the reaction Specificity close to that of papain. As compared to cathepsin B, cathepsin L exhibits higher activity toward protein substrates, but has little activity on Z-Arg-Arg-NHMec, and no peptidyl-dipeptidase activity.. Its activity is regulated as follows. Inhibited by the propeptide produced by autocleavage. Long isoform of CD74/Ii chain stabilizes the conformation of mature CTSL by binding to its active site and serving as a chaperone to help maintain a pool of mature enzyme in endocytic compartments and extracellular space of APCs. IFNG enhances the conversion into the CTSL mature and active form. Inhibited by CST6. Inhibited by the glycopeptide antibiotic teicoplanin. Inhibited by amantadine. Its function is as follows. Thiol protease important for the overall degradation of proteins in lysosomes. Plays a critical for normal cellular functions such as general protein turnover, antigen processing and bone remodeling. Involved in the solubilization of cross-linked TG/thyroglobulin and in the subsequent release of thyroid hormone thyroxine (T4) by limited proteolysis of TG/thyroglobulin in the thyroid follicle lumen. In neuroendocrine chromaffin cells secretory vesicles, catalyzes the prohormone proenkephalin processing to the active enkephalin peptide neurotransmitter. In thymus, regulates CD4(+) T cell positive selection by generating the major histocompatibility complex class II (MHCII) bound peptide ligands presented by cortical thymic epithelial cells. Also mediates invariant chain processing in cortical thymic epithelial cells. Major elastin-degrading enzyme at neutral pH. Accumulates as a mature and active enzyme in the extracellular space of antigen presenting cells (APCs) to regulate degradation of the extracellular matrix in the course of inflammation. Secreted form generates endostatin from COL18A1. Critical for cardiac morphology and function. Plays an important role in hair follicle morphogenesis and cycling, as well as epidermal differentiation. Required for maximal stimulation of steroidogenesis by TIMP1. In Rattus norvegicus (Rat), this protein is Procathepsin L.